The following is a 320-amino-acid chain: Methyltransferase gedG (320 aa).

A methyltransferase domain region spans residues 61 to 154; the sequence is DAGAGNGVYS…QLRPGGTFAC (94 aa). Residues 231-252 are disordered; sequence GLLPPERRGEVTEPDHEGPHDQ. The span at 235–252 shows a compositional bias: basic and acidic residues; it reads PERRGEVTEPDHEGPHDQ.

This sequence belongs to the methyltransferase superfamily.

It participates in secondary metabolite biosynthesis. Functionally, methyltransferase; part of the gene cluster that mediates the biosynthesis of geodin, an intermediate in the biosynthesis of other natural products. The pathway begins with the synthesis of atrochrysone thioester by the polyketide synthase (PKS) gedC. The atrochrysone carboxyl ACP thioesterase gedB then breaks the thioester bond and releases the atrochrysone carboxylic acid from gedC. The atrochrysone carboxylic acid is then converted to atrochrysone which is further transformed into emodinanthrone. The next step is performed by the emodinanthrone oxygenase gedH that catalyzes the oxidation of emodinanthrone to emodin. Emodin O-methyltransferase encoded probably by gedA then catalyzes methylation of the 8-hydroxy group of emodin to form questin. Ring cleavage of questin by questin oxidase gedK leads to desmethylsulochrin via several intermediates including questin epoxide. Another methylation step probably catalyzed by methyltransferase gedG leads to the formation of sulochrin which is further converted to dihydrogeodin by the sulochrin halogenase gedL. Finally, the dihydrogeodin oxidase gedJ catalyzes the stereospecific phenol oxidative coupling reaction converting dihydrogeodin to geodin. The sequence is that of Methyltransferase gedG from Aspergillus terreus (strain NIH 2624 / FGSC A1156).